The following is a 1342-amino-acid chain: DNA-directed RNA polymerase subunit beta (1342 aa).

Belongs to the RNA polymerase beta chain family. The RNAP catalytic core consists of 2 alpha, 1 beta, 1 beta' and 1 omega subunit. When a sigma factor is associated with the core the holoenzyme is formed, which can initiate transcription.

The catalysed reaction is RNA(n) + a ribonucleoside 5'-triphosphate = RNA(n+1) + diphosphate. Functionally, DNA-dependent RNA polymerase catalyzes the transcription of DNA into RNA using the four ribonucleoside triphosphates as substrates. The polypeptide is DNA-directed RNA polymerase subunit beta (Yersinia enterocolitica serotype O:8 / biotype 1B (strain NCTC 13174 / 8081)).